The following is a 227-amino-acid chain: ATP synthase F(0) complex subunit a (227 aa).

The next 6 membrane-spanning stretches (helical) occupy residues 12–32 (PTYL…ILFP), 69–89 (WAVL…LGLL), 98–118 (QLSL…IIGM), 132–152 (EGTP…SLFI), 180–200 (FVLM…LFLL), and 202–222 (LLEI…LSLY).

The protein belongs to the ATPase A chain family. As to quaternary structure, component of the ATP synthase complex composed at least of ATP5F1A/subunit alpha, ATP5F1B/subunit beta, ATP5MC1/subunit c (homooctomer), MT-ATP6/subunit a, MT-ATP8/subunit 8, ATP5ME/subunit e, ATP5MF/subunit f, ATP5MG/subunit g, ATP5MK/subunit k, ATP5MJ/subunit j, ATP5F1C/subunit gamma, ATP5F1D/subunit delta, ATP5F1E/subunit epsilon, ATP5PF/subunit F6, ATP5PB/subunit b, ATP5PD/subunit d, ATP5PO/subunit OSCP. ATP synthase complex consists of a soluble F(1) head domain (subunits alpha(3) and beta(3)) - the catalytic core - and a membrane F(0) domain - the membrane proton channel (subunits c, a, 8, e, f, g, k and j). These two domains are linked by a central stalk (subunits gamma, delta, and epsilon) rotating inside the F1 region and a stationary peripheral stalk (subunits F6, b, d, and OSCP). Interacts with DNAJC30; interaction is direct.

The protein resides in the mitochondrion inner membrane. The catalysed reaction is H(+)(in) = H(+)(out). Its function is as follows. Subunit a, of the mitochondrial membrane ATP synthase complex (F(1)F(0) ATP synthase or Complex V) that produces ATP from ADP in the presence of a proton gradient across the membrane which is generated by electron transport complexes of the respiratory chain. ATP synthase complex consist of a soluble F(1) head domain - the catalytic core - and a membrane F(1) domain - the membrane proton channel. These two domains are linked by a central stalk rotating inside the F(1) region and a stationary peripheral stalk. During catalysis, ATP synthesis in the catalytic domain of F(1) is coupled via a rotary mechanism of the central stalk subunits to proton translocation. With the subunit c (ATP5MC1), forms the proton-conducting channel in the F(0) domain, that contains two crucial half-channels (inlet and outlet) that facilitate proton movement from the mitochondrial intermembrane space (IMS) into the matrix. Protons are taken up via the inlet half-channel and released through the outlet half-channel, following a Grotthuss mechanism. This Salmo salar (Atlantic salmon) protein is ATP synthase F(0) complex subunit a.